The primary structure comprises 183 residues: Der GTPase-activating protein YihI (183 aa).

Residues 1 to 18 are compositionally biased toward low complexity; it reads MNQPSKAPRAPRSSAATP. The tract at residues 1–114 is disordered; sequence MNQPSKAPRA…EEELAKLEND (114 aa). The segment covering 25-34 has biased composition (basic and acidic residues); that stretch reads RAELDQEARE. Residues 56-65 show a composition bias toward low complexity; sequence NQKNKAAAQA. A compositionally biased stretch (basic and acidic residues) spans 92–114; sequence PKAEAKPKPRLTPEEELAKLEND.

It belongs to the YihI family. In terms of assembly, interacts with Der.

In terms of biological role, a GTPase-activating protein (GAP) that modifies Der/EngA GTPase function. May play a role in ribosome biogenesis. The chain is Der GTPase-activating protein YihI from Serratia proteamaculans (strain 568).